The following is a 444-amino-acid chain: Alpha-(1,3)-fucosyltransferase B (444 aa).

Residues 1–6 (MRLAQR) are Cytoplasmic-facing. The helical; Signal-anchor for type II membrane protein transmembrane segment at 7-27 (YGIALVALLMVGATVLFFWSE) threads the bilayer. The Lumenal segment spans residues 28–444 (NIINYENIKF…GNNCSNSSNT (417 aa)). N-linked (GlcNAc...) asparagine glycosylation is found at asparagine 279, asparagine 437, and asparagine 440.

The protein belongs to the glycosyltransferase 10 family.

The protein localises to the golgi apparatus. Its subcellular location is the golgi stack membrane. It functions in the pathway protein modification; protein glycosylation. The chain is Alpha-(1,3)-fucosyltransferase B (FucTB) from Drosophila melanogaster (Fruit fly).